The sequence spans 371 residues: Aminomethyltransferase (371 aa).

The protein belongs to the GcvT family. The glycine cleavage system is composed of four proteins: P, T, L and H.

It catalyses the reaction N(6)-[(R)-S(8)-aminomethyldihydrolipoyl]-L-lysyl-[protein] + (6S)-5,6,7,8-tetrahydrofolate = N(6)-[(R)-dihydrolipoyl]-L-lysyl-[protein] + (6R)-5,10-methylene-5,6,7,8-tetrahydrofolate + NH4(+). In terms of biological role, the glycine cleavage system catalyzes the degradation of glycine. The chain is Aminomethyltransferase from Cellvibrio japonicus (strain Ueda107) (Pseudomonas fluorescens subsp. cellulosa).